The primary structure comprises 217 residues: Probable transaldolase (217 aa).

K83 functions as the Schiff-base intermediate with substrate in the catalytic mechanism.

It belongs to the transaldolase family. Type 3B subfamily.

The protein localises to the cytoplasm. The enzyme catalyses D-sedoheptulose 7-phosphate + D-glyceraldehyde 3-phosphate = D-erythrose 4-phosphate + beta-D-fructose 6-phosphate. It participates in carbohydrate degradation; pentose phosphate pathway; D-glyceraldehyde 3-phosphate and beta-D-fructose 6-phosphate from D-ribose 5-phosphate and D-xylulose 5-phosphate (non-oxidative stage): step 2/3. Functionally, transaldolase is important for the balance of metabolites in the pentose-phosphate pathway. The protein is Probable transaldolase of Bartonella tribocorum (strain CIP 105476 / IBS 506).